Reading from the N-terminus, the 437-residue chain is MGSVCLSGGGSLHGSVRVPGDKSISHRALLFGAIATGTTTIEGLLPAEDPLSTAACLRAMGVTVSAIDSSGVVRVEGVGLDGLQEPAQVLDCGNSGTTMRLMLGLLAGRHGRHFVLDGDGSLRRRPMARVAQPLAQMGAEIGGREGGNKAPLAIAGQTLSGGTIRTPVASAQVKSALLLAGLTAKGSTTVIEPALSRDHSERMLRAFGAELISEPHAAEGPTAIVRPGAELHGQHVVVPGDISSAAFWLIAALVVPGTELTIENVGINPTRTGILDVLEQMGAPLEVLNQRDVAGEPVADLRVRYSPLKAFEIGGELIPRLVDEIPILSVAALCAEGTSVMRDAAELRVKETDRLAVMARQLRAMGAELEETTDGMVIPGGQRLTGAQVDSETDHRVAMSLAVAALIASGDTSIDQSEAAAVSYPSFWDELARLQRS.

Positions 22, 23, and 27 each coordinate 3-phosphoshikimate. Phosphoenolpyruvate is bound at residue Lys22. Gly96 and Arg125 together coordinate phosphoenolpyruvate. The 3-phosphoshikimate site is built by Ser170, Gln172, Asp323, and Lys350. A phosphoenolpyruvate-binding site is contributed by Gln172. Catalysis depends on Asp323, which acts as the Proton acceptor. Residues Arg354 and Arg396 each contribute to the phosphoenolpyruvate site.

The protein belongs to the EPSP synthase family. Monomer.

It localises to the cytoplasm. The catalysed reaction is 3-phosphoshikimate + phosphoenolpyruvate = 5-O-(1-carboxyvinyl)-3-phosphoshikimate + phosphate. Its pathway is metabolic intermediate biosynthesis; chorismate biosynthesis; chorismate from D-erythrose 4-phosphate and phosphoenolpyruvate: step 6/7. Its function is as follows. Catalyzes the transfer of the enolpyruvyl moiety of phosphoenolpyruvate (PEP) to the 5-hydroxyl of shikimate-3-phosphate (S3P) to produce enolpyruvyl shikimate-3-phosphate and inorganic phosphate. The sequence is that of 3-phosphoshikimate 1-carboxyvinyltransferase from Synechococcus sp. (strain RCC307).